The following is a 187-amino-acid chain: Apolipophorin-3 (187 aa).

The first 17 residues, 1–17, serve as a signal peptide directing secretion; the sequence is MAAKFIILLALFALSQA. Positions 18–22 are excised as a propeptide; that stretch reads SVVRR.

It belongs to the insect apolipophorin-3 family. In terms of assembly, equilibrium between a soluble monomer and a bound lipoprotein form. Apolipophorin-3 associates with lipophorin during lipid loading until each particle contains 9 or 14 molecules of apolipophorin-3. As to expression, hemolymph.

The protein localises to the secreted. Functionally, assists in the loading of diacylglycerol, generated from triacylglycerol stores in the fat body through the action of adipokinetic hormone, into lipophorin, the hemolymph lipoprotein. It increases the lipid carrying capacity of lipophorin by covering the expanding hydrophobic surface resulting from diacylglycerol uptake. It thus plays a critical role in the transport of lipids during flight in several species of insects. This is Apolipophorin-3 from Hyphantria cunea (Fall webworm moth).